The sequence spans 139 residues: Small ribosomal subunit protein uS12 (139 aa).

Residues 1 to 55 form a disordered region; sequence MPTINQLIRKGRKAKVKKSDSPALNKGYNSFKKVQTDLSSPQKRGVCTRVGTMTP. A compositionally biased stretch (polar residues) spans 32 to 42; the sequence is KKVQTDLSSPQ.

It belongs to the universal ribosomal protein uS12 family. In terms of assembly, part of the 30S ribosomal subunit. Contacts proteins S8 and S17. May interact with IF1 in the 30S initiation complex.

In terms of biological role, with S4 and S5 plays an important role in translational accuracy. Its function is as follows. Interacts with and stabilizes bases of the 16S rRNA that are involved in tRNA selection in the A site and with the mRNA backbone. Located at the interface of the 30S and 50S subunits, it traverses the body of the 30S subunit contacting proteins on the other side and probably holding the rRNA structure together. The combined cluster of proteins S8, S12 and S17 appears to hold together the shoulder and platform of the 30S subunit. In Halalkalibacterium halodurans (strain ATCC BAA-125 / DSM 18197 / FERM 7344 / JCM 9153 / C-125) (Bacillus halodurans), this protein is Small ribosomal subunit protein uS12.